Consider the following 56-residue polypeptide: Large ribosomal subunit protein bL32 (56 aa).

Residues 1-16 are compositionally biased toward basic residues; sequence MAVQKSKKSRARRGMR. Residues 1–56 form a disordered region; it reads MAVQKSKKSRARRGMRRSHDAISGPSLTVDQTSGETHRRHHVTADGYYKGVQVISK. Positions 25–34 are enriched in polar residues; that stretch reads PSLTVDQTSG.

The protein belongs to the bacterial ribosomal protein bL32 family.

The chain is Large ribosomal subunit protein bL32 from Pseudoalteromonas translucida (strain TAC 125).